The primary structure comprises 357 residues: Uroporphyrinogen decarboxylase (357 aa).

Substrate contacts are provided by residues 30–34 (RQAGR), aspartate 79, tyrosine 154, serine 209, and histidine 336.

The protein belongs to the uroporphyrinogen decarboxylase family. In terms of assembly, homodimer.

It localises to the cytoplasm. The catalysed reaction is uroporphyrinogen III + 4 H(+) = coproporphyrinogen III + 4 CO2. It functions in the pathway porphyrin-containing compound metabolism; protoporphyrin-IX biosynthesis; coproporphyrinogen-III from 5-aminolevulinate: step 4/4. In terms of biological role, catalyzes the decarboxylation of four acetate groups of uroporphyrinogen-III to yield coproporphyrinogen-III. This Mycobacterium bovis (strain ATCC BAA-935 / AF2122/97) protein is Uroporphyrinogen decarboxylase.